We begin with the raw amino-acid sequence, 391 residues long: MAKSKFERTKPHVNIGTIGHVDHGKTSLTAAITKYFGEFKAYDQIDAAPEERARGITISTAHVEYETEKRHYAHVDCPGHADYVKNMITGAAQMDGAILVVSAADGPMPQTREHILLARQVGVPAIVVFLNKVDQVDDAELLELVELEIRELLSKYDFPGDDIPIVKGSALAALEDKDKSIGEDAVRLLMSEVDNYIPTPERPIDQPFLLPIEDVFSISGRGTVVTGRVERGVIKVGEEIEIIGIRPTSKTTVTGVEMFRKLLDQGQAGDNIGALLRGVDREGIERGQVLAKPGSVTPHTRFKAEAYILTKDEGGRHTPFFTNYRPQFYFRTTDVTGIVTLPEGIEMVMPGDNVAMDVSLIVPIAMEEKLRFAIREGGRTVGAGIVSKIIE.

In terms of domain architecture, tr-type G spans 10–201 (KPHVNIGTIG…EVDNYIPTPE (192 aa)). The G1 stretch occupies residues 19–26 (GHVDHGKT). A GTP-binding site is contributed by 19-26 (GHVDHGKT). Thr26 contributes to the Mg(2+) binding site. The tract at residues 55–59 (GITIS) is G2. Residues 76-79 (DCPG) form a G3 region. GTP is bound by residues 76–80 (DCPGH) and 131–134 (NKVD). The segment at 131–134 (NKVD) is G4. The interval 169–171 (SAL) is G5.

It belongs to the TRAFAC class translation factor GTPase superfamily. Classic translation factor GTPase family. EF-Tu/EF-1A subfamily. As to quaternary structure, monomer.

The protein localises to the cytoplasm. It catalyses the reaction GTP + H2O = GDP + phosphate + H(+). In terms of biological role, GTP hydrolase that promotes the GTP-dependent binding of aminoacyl-tRNA to the A-site of ribosomes during protein biosynthesis. The sequence is that of Elongation factor Tu 2 from Bartonella quintana (strain Toulouse) (Rochalimaea quintana).